The following is a 501-amino-acid chain: MTDLPYPEYECWFLTGSQHLYGEDVLSAVARQSQAIVEALNAAGLPVRLVWKPVLTDATGIRRMCSEASATDACIGVIAWMHTFSPAKAWINGLLALRKPLLHLHTQANLTLPWSTIDMDFMNLNQAAHGDREFGYVAARLAIPRKIVTGHFSDPDVVRDIAAWQRAAAGLADLRSTRLVRFGDTMRNVAVTDGDRVEAQIRLGSAIETYGVHDLGVRVDAVAESDVDALVDRYLADYDMAPELTIGGARHESLRYAAKLELALRSFLHDGRFTAFTTNFEDLGPLRQLPGIAVQRLMADGFGFGAEGDWKTALLVRAVKTMSRGLPGGTSFMEDYTYHLEPSGRLVLGAHMLEVCPTLTSATPRCEIHPLLMGGREDPVRLVFTADPAPAVIVGLCDMGDRLRLVANTADLVAPPEPLPRLPVARAVWQPHPELKTAATAWIAAGGPHHTALSTAVSAREIRDFARMAGLELVLIDEHTALDAALDRLWAIEQTRASRPW.

Residues Glu307, Glu334, His351, and His450 each contribute to the Mn(2+) site.

It belongs to the arabinose isomerase family. Requires Mn(2+) as cofactor.

The enzyme catalyses beta-L-arabinopyranose = L-ribulose. It functions in the pathway carbohydrate degradation; L-arabinose degradation via L-ribulose; D-xylulose 5-phosphate from L-arabinose (bacterial route): step 1/3. Its function is as follows. Catalyzes the conversion of L-arabinose to L-ribulose. This chain is L-arabinose isomerase, found in Acidothermus cellulolyticus (strain ATCC 43068 / DSM 8971 / 11B).